Reading from the N-terminus, the 59-residue chain is Large ribosomal subunit protein bL32 (59 aa).

The interval 1-59 (MAVQQNKKSPSKRGMHRSHDFLTNPPLAVEPTSGEIHLRHHVSPNGYYRGRKVLPAKGE) is disordered. Positions 49-59 (RGRKVLPAKGE) are enriched in basic residues.

Belongs to the bacterial ribosomal protein bL32 family.

This is Large ribosomal subunit protein bL32 from Methylobacillus flagellatus (strain ATCC 51484 / DSM 6875 / VKM B-1610 / KT).